The following is a 234-amino-acid chain: Sugar fermentation stimulation protein homolog (234 aa).

This sequence belongs to the SfsA family.

The sequence is that of Sugar fermentation stimulation protein homolog from Pectobacterium carotovorum subsp. carotovorum (strain PC1).